A 1111-amino-acid chain; its full sequence is MTLTSPPRTRADSRHSWVPAAAGWTVGVIATLSLIASVSPLVRWIIRVPREFVNDYIFNFPDTSFAWAFVLALLAGALAARKRIAWWILLLYMVAAVGWNVADLLTGDESVVEEMGEVIGLAFHLAAVAFLLLARPLFWARVRRGALFKAAGVLAAGMAVGVLVGWGLLELFPGDLERDYRLAYAANRVFAFAGVDPDAFDGQHPHVVVNALLGLFGALALMAAAIVLFQSQRSENALTGEDESAIRGLLELYGKNDSLGYFATRRDKSVVFAPNGRAAITYRVEVGVCLASGDPVGDPKAWPQAIDAWLALCGTYGWAPGVMGASVGGAEAFRAAGLSAIQLGDEAILHPDSFRLSGPDMRAVRQAVTRARRAGVTVRIRRHRELSPEQMAEVIAHADAWRDTETERGFSMALGRLGDPADSDCLLVEAVQGETGGERSDPGSGTVVAMLSLVPWGSNGASLDVMRRSPQSPNGTIELMVSELCMQAEDIGVTRISLNFAMFRSAFEQGAQLGAGPVARLWRWLLVFFSRWWQLETLYRSNMKYQPQWVPRYACYEDARLIPRVGVASVIAEGFLVLPFSRRNKQHTGHHTSAPQDLVASGVLHHDGTAPDMSGLRTDTADDEPPRLPEQVRVRMAKLKALQADGVDAYPVGRPPSHTAAAAVDSPDDVELDVAGRVLRIRDYGGVLFAQLRDWSGEVQLLLDNSTLEQGSTADFTAAIDLGDLIEATGTMGYSKNGTRSLLVRHWRLTGKCLRPLPDKWKGLTDQEARVRARYVDLAVNTEARDLIRARSGVLHAIRDTLYHKGFLEVETPILQQIHGGANARPFLTHINAYDLDLYLRIAPELYLKRLCVGGVERVFELGRAFRNEGVDFSHNPEFTLLEAYQAHADYHVWIDGCRELIQNAAMAANGEHVFLRPRDDGVLEPVDISGPWTVKTVHDAVSEALGEHIDAATELPTLRKLADAAGIPYLTHWDEGAVVLEMYEHLVEDRTEKPTFYKDFPTSVSPLTRPHRSIAGVAERWDLVAWGVELGTAYSELTDPVEQRRRLQAQSLLAAGGDPEAMELDEDFLQAMEYAMPPTGGLGMGVDRVVMLITGRSIRETLPFPLARPR.

Residues 1-612 (MTLTSPPRTR…VLHHDGTAPD (612 aa)) are phosphatidylglycerol lysyltransferase. 7 consecutive transmembrane segments (helical) span residues 18–38 (VPAAAGWTVGVIATLSLIASV), 60–80 (FPDTSFAWAFVLALLAGALAA), 84–104 (IAWWILLLYMVAAVGWNVADL), 118–138 (VIGLAFHLAAVAFLLLARPLF), 152–172 (GVLAAGMAVGVLVGWGLLELF), 209–229 (VNALLGLFGALALMAAAIVLF), and 308–328 (AWLALCGTYGWAPGVMGASVG). Residues 613-1111 (MSGLRTDTAD…TLPFPLARPR (499 aa)) form a lysine--tRNA ligase region. Positions 674 to 747 (VAGRVLRIRD…GTRSLLVRHW (74 aa)) form a DNA-binding region, OB. Positions 1023 and 1030 each coordinate Mg(2+).

In the N-terminal section; belongs to the LPG synthetase family. The protein in the C-terminal section; belongs to the class-II aminoacyl-tRNA synthetase family. It depends on Mg(2+) as a cofactor.

The protein resides in the cell membrane. It carries out the reaction tRNA(Lys) + L-lysine + ATP = L-lysyl-tRNA(Lys) + AMP + diphosphate. It catalyses the reaction L-lysyl-tRNA(Lys) + a 1,2-diacyl-sn-glycero-3-phospho-(1'-sn-glycerol) = a 1,2-diacyl-sn-glycero-3-phospho-1'-(3'-O-L-lysyl)-sn-glycerol + tRNA(Lys). In terms of biological role, catalyzes the production of L-lysyl-tRNA(Lys)transfer and the transfer of a lysyl group from L-lysyl-tRNA(Lys) to membrane-bound phosphatidylglycerol (PG), which produces lysylphosphatidylglycerol (LPG), one of the components of the bacterial membrane with a positive net charge. LPG synthesis contributes to the resistance to cationic antimicrobial peptides (CAMPs) and likely protects M.tuberculosis against the CAMPs produced by competiting microorganisms (bacteriocins). In fact, the modification of anionic phosphatidylglycerol with positively charged L-lysine results in repulsion of the peptides. The sequence is that of Lysylphosphatidylglycerol biosynthesis bifunctional protein LysX (lysX) from Mycobacterium sp. (strain JLS).